The following is a 241-amino-acid chain: Leucyl/phenylalanyl-tRNA--protein transferase (241 aa).

This sequence belongs to the L/F-transferase family.

The protein resides in the cytoplasm. The catalysed reaction is N-terminal L-lysyl-[protein] + L-leucyl-tRNA(Leu) = N-terminal L-leucyl-L-lysyl-[protein] + tRNA(Leu) + H(+). It catalyses the reaction N-terminal L-arginyl-[protein] + L-leucyl-tRNA(Leu) = N-terminal L-leucyl-L-arginyl-[protein] + tRNA(Leu) + H(+). The enzyme catalyses L-phenylalanyl-tRNA(Phe) + an N-terminal L-alpha-aminoacyl-[protein] = an N-terminal L-phenylalanyl-L-alpha-aminoacyl-[protein] + tRNA(Phe). In terms of biological role, functions in the N-end rule pathway of protein degradation where it conjugates Leu, Phe and, less efficiently, Met from aminoacyl-tRNAs to the N-termini of proteins containing an N-terminal arginine or lysine. In Colwellia psychrerythraea (strain 34H / ATCC BAA-681) (Vibrio psychroerythus), this protein is Leucyl/phenylalanyl-tRNA--protein transferase.